The sequence spans 346 residues: Uroporphyrinogen decarboxylase (346 aa).

Substrate-binding positions include 21 to 25, phenylalanine 40, aspartate 71, tyrosine 146, serine 201, and histidine 316; that span reads RQAGR.

It belongs to the uroporphyrinogen decarboxylase family. Homodimer.

The protein resides in the cytoplasm. The enzyme catalyses uroporphyrinogen III + 4 H(+) = coproporphyrinogen III + 4 CO2. It functions in the pathway porphyrin-containing compound metabolism; protoporphyrin-IX biosynthesis; coproporphyrinogen-III from 5-aminolevulinate: step 4/4. Its function is as follows. Catalyzes the decarboxylation of four acetate groups of uroporphyrinogen-III to yield coproporphyrinogen-III. This Rickettsia conorii (strain ATCC VR-613 / Malish 7) protein is Uroporphyrinogen decarboxylase.